The chain runs to 26 residues: Acetylcholine receptor subunit delta (26 aa).

The protein belongs to the ligand-gated ion channel (TC 1.A.9) family. Acetylcholine receptor (TC 1.A.9.1) subfamily. In terms of assembly, pentamer of two alpha chains, and one each of the beta, delta, and gamma chains.

The protein localises to the postsynaptic cell membrane. It localises to the cell membrane. It catalyses the reaction K(+)(in) = K(+)(out). It carries out the reaction Na(+)(in) = Na(+)(out). In terms of biological role, after binding acetylcholine, the AChR responds by an extensive change in conformation that affects all subunits and leads to opening of an ion-conducting channel across the plasma membrane. The polypeptide is Acetylcholine receptor subunit delta (chrnd) (Electrophorus electricus (Electric eel)).